Consider the following 289-residue polypeptide: MPVVRKIFRRRRGDSESEEDEQDSEEVRLKLEETREVQNLRKRPNGVSAVALLVGEKVQEETTLVDDPFQMKTGGMVDMKKLKERGKDKISEEEDLHLGTSFSAETNRRDEDADMMKYIETELKKRKGIVEHEEQKVKPKNAEDCLYELPENIRVSSAKKTEEMLSNQMLSGIPEVDQGIDAKIKNIISTEDAKARLLAEQQNKKKDSETSFVPTNMAVNYVQHNRFYHEELNAPIRRNKEEPKARPLRVGDTEKPEPERSPPNRKRPANEKATDDYHYEKFKKMNRRY.

A compositionally biased stretch (basic residues) spans 1–12; the sequence is MPVVRKIFRRRR. 2 disordered regions span residues 1–27 and 86–109; these read MPVV…SEEV and GKDK…TNRR. An interaction with SNRNP200 region spans residues 5–58; it reads RKIFRRRRGDSESEEDEQDSEEVRLKLEETREVQNLRKRPNGVSAVALLVGEKV. A phosphoserine mark is found at serine 15 and serine 17. Phosphotyrosine is present on tyrosine 147. Over residues 232 to 283 the composition is skewed to basic and acidic residues; sequence LNAPIRRNKEEPKARPLRVGDTEKPEPERSPPNRKRPANEKATDDYHYEKFK. The segment at 232–289 is disordered; it reads LNAPIRRNKEEPKARPLRVGDTEKPEPERSPPNRKRPANEKATDDYHYEKFKKMNRRY. Threonine 253 carries the phosphothreonine modification. Position 261 is a phosphoserine (serine 261).

This sequence belongs to the TLS1 family. In terms of assembly, component of the spliceosome. Interacts with SNRNP200; the interaction is direct. Interacts with PRPF8.

The protein resides in the nucleus. It localises to the chromosome. The protein localises to the centromere. Plays a role in pre-mRNA splicing by promoting usage of the upstream 3'-splice site at alternative NAGNAG splice sites; these are sites featuring alternative acceptor motifs separated by only a few nucleotides. May also modulate exon inclusion events. Plays a role in spliceosomal remodeling by displacing WBP4 from SNRNP200 and may act to inhibit SNRNP200 helicase activity. Binds U5 snRNA. Required for proper chromosome segregation. Not required for splicing of shelterin components. This is Splicing factor C9orf78 homolog from Pongo abelii (Sumatran orangutan).